The primary structure comprises 682 residues: Glutamine--fructose-6-phosphate aminotransferase [isomerizing] 2 (682 aa).

The For GATase activity role is filled by Cys2. The Glutamine amidotransferase type-2 domain maps to 2–288 (CGIFAYMNYR…DDDIAAVADG (287 aa)). Ser244 carries the post-translational modification Phosphoserine. SIS domains lie at 360 to 499 (HLKE…DRIS) and 531 to 672 (LALE…VDFP). Residues 377-378 (TS), 422-424 (SQS), Thr427, and His578 each bind substrate.

It catalyses the reaction D-fructose 6-phosphate + L-glutamine = D-glucosamine 6-phosphate + L-glutamate. The protein operates within nucleotide-sugar biosynthesis; UDP-N-acetyl-alpha-D-glucosamine biosynthesis; alpha-D-glucosamine 6-phosphate from D-fructose 6-phosphate: step 1/1. Its function is as follows. Controls the flux of glucose into the hexosamine pathway. Most likely involved in regulating the availability of precursors for N- and O-linked glycosylation of proteins. The polypeptide is Glutamine--fructose-6-phosphate aminotransferase [isomerizing] 2 (Gfpt2) (Mus musculus (Mouse)).